A 374-amino-acid chain; its full sequence is Cyclin-dependent kinase 9 (374 aa).

The 300-residue stretch at Tyr-19–Phe-318 folds into the Protein kinase domain. ATP-binding positions include Ile-25–Val-33 and Lys-48. Asp-151 (proton acceptor) is an active-site residue. The interval Pro-345–Phe-374 is disordered. A compositionally biased stretch (polar residues) spans Gln-354 to Ser-368.

This sequence belongs to the protein kinase superfamily. CMGC Ser/Thr protein kinase family. CDC2/CDKX subfamily. As to quaternary structure, component of the super elongation complex (SEC). Associates with ccnt1/cyclin-T1, ccnt2/cyclin-T2 or ccnk/cyclin-K to form active P-TEFb.

The protein localises to the nucleus. Its subcellular location is the cytoplasm. The protein resides in the PML body. It catalyses the reaction L-seryl-[protein] + ATP = O-phospho-L-seryl-[protein] + ADP + H(+). It carries out the reaction L-threonyl-[protein] + ATP = O-phospho-L-threonyl-[protein] + ADP + H(+). The catalysed reaction is [DNA-directed RNA polymerase] + ATP = phospho-[DNA-directed RNA polymerase] + ADP + H(+). Its function is as follows. Protein kinase involved in the regulation of transcription. Member of the cyclin-dependent kinase pair (CDK9/cyclin-T) complex, also called positive transcription elongation factor b (P-TEFb), which facilitates the transition from abortive to productive elongation by phosphorylating the CTD (C-terminal domain) of the large subunit of RNA polymerase II (RNAP II) polr2a, supt5h and rdbp. This complex is inactive when in the 7SK snRNP complex form. Regulates cytokine inducible transcription networks by facilitating promoter recognition of target transcription factors. P-TEFb is also involved in cotranscriptional histone modification, mRNA processing and mRNA export. The chain is Cyclin-dependent kinase 9 from Danio rerio (Zebrafish).